The following is a 419-amino-acid chain: L-rhamnose isomerase (419 aa).

Mn(2+)-binding residues include histidine 262, aspartate 294, and aspartate 296.

The protein belongs to the rhamnose isomerase family. As to quaternary structure, homotetramer. Requires Mn(2+) as cofactor.

Its subcellular location is the cytoplasm. It carries out the reaction L-rhamnopyranose = L-rhamnulose. It participates in carbohydrate degradation; L-rhamnose degradation; glycerone phosphate from L-rhamnose: step 1/3. Catalyzes the interconversion of L-rhamnose and L-rhamnulose. The sequence is that of L-rhamnose isomerase from Salmonella enteritidis PT4 (strain P125109).